Consider the following 205-residue polypeptide: Protein N-terminal glutamine amidohydrolase (205 aa).

Active-site residues include cysteine 20, histidine 74, and aspartate 90.

Belongs to the NTAQ1 family. As to quaternary structure, monomer.

It carries out the reaction N-terminal L-glutaminyl-[protein] + H2O = N-terminal L-glutamyl-[protein] + NH4(+). Mediates the side-chain deamidation of N-terminal glutamine residues to glutamate, an important step in N-end rule pathway of protein degradation. Conversion of the resulting N-terminal glutamine to glutamate renders the protein susceptible to arginylation, polyubiquitination and degradation as specified by the N-end rule. Does not act on substrates with internal or C-terminal glutamine and does not act on non-glutamine residues in any position. This is Protein N-terminal glutamine amidohydrolase (tun) from Drosophila melanogaster (Fruit fly).